A 734-amino-acid polypeptide reads, in one-letter code: Photosystem I P700 chlorophyll a apoprotein A2 (734 aa).

A run of 8 helical transmembrane segments spans residues 46-69 (IFASHFGQLAIIFLWTSGNLFHVA), 135-158 (LYTGALSLLILSAIFLIAGWLHLQ), 175-199 (LNHHLSGLFGVSSLAWTGHLVHVAI), 273-291 (IAHHHLAIAVVFIIAGHMY), 330-353 (LHFQLGLALASLGVITSLVAQHMY), 369-395 (AALYTHHQYIAGFIMTGAFAHGAIFLI), 417-439 (AIISHLSWASLFLGFHTLGLYVH), and 517-535 (FLVHHAIALGLHTTTLILV). C559 and C568 together coordinate [4Fe-4S] cluster. Transmembrane regions (helical) follow at residues 575–596 (AFYSAVFWMLNTIGWVTLYWHW) and 643–665 (LSVWAWMFLFGHLVWAIGFMFLI). H654, M662, and Y670 together coordinate chlorophyll a. Residue W671 coordinates phylloquinone. A helical membrane pass occupies residues 707–727 (LVGLAHFSVGYIFTYAAFLIA).

It belongs to the PsaA/PsaB family. In terms of assembly, the PsaA/B heterodimer binds the P700 chlorophyll special pair and subsequent electron acceptors. PSI consists of a core antenna complex that captures photons, and an electron transfer chain that converts photonic excitation into a charge separation. The eukaryotic PSI reaction center is composed of at least 11 subunits. It depends on P700 is a chlorophyll a/chlorophyll a' dimer, A0 is one or more chlorophyll a, A1 is one or both phylloquinones and FX is a shared 4Fe-4S iron-sulfur center. as a cofactor.

Its subcellular location is the plastid. The protein resides in the chloroplast thylakoid membrane. It carries out the reaction reduced [plastocyanin] + hnu + oxidized [2Fe-2S]-[ferredoxin] = oxidized [plastocyanin] + reduced [2Fe-2S]-[ferredoxin]. PsaA and PsaB bind P700, the primary electron donor of photosystem I (PSI), as well as the electron acceptors A0, A1 and FX. PSI is a plastocyanin-ferredoxin oxidoreductase, converting photonic excitation into a charge separation, which transfers an electron from the donor P700 chlorophyll pair to the spectroscopically characterized acceptors A0, A1, FX, FA and FB in turn. Oxidized P700 is reduced on the lumenal side of the thylakoid membrane by plastocyanin. This Huperzia lucidula (Shining clubmoss) protein is Photosystem I P700 chlorophyll a apoprotein A2.